The following is a 523-amino-acid chain: 3-hydroxybenzoate--CoA ligase (523 aa).

It belongs to the ATP-dependent AMP-binding enzyme family. Benzoate-CoA ligase subfamily.

It catalyses the reaction 3-hydroxybenzoate + ATP + CoA = 3-hydroxybenzoyl-CoA + AMP + diphosphate. The enzyme catalyses 4-hydroxybenzoate + ATP + CoA = 4-hydroxybenzoyl-CoA + AMP + diphosphate. In terms of biological role, ligase involved in the anaerobic degradation of 3-hydroxybenzoate (3OHBz). Catalyzes the activation of 3-hydroxybenzoate to 3-hydroxybenzoyl-CoA. Also shows high activity with protocatechuate and 4-hydroxybenzoate. Exhibits lower activity with benzoate, but cannot use 2-hydroxybenzoate or benzoate analogs containing other substituents at the ortho position, such as 2-aminobenzoate (anthranilate). The protein is 3-hydroxybenzoate--CoA ligase of Aromatoleum sp. (strain CIB) (Azoarcus sp. (strain CIB)).